An 876-amino-acid chain; its full sequence is Radial spoke head 10 homolog B (876 aa).

Residues 1-16 (MVKEKKKADKKGDKSA) show a composition bias toward basic and acidic residues. The disordered stretch occupies residues 1 to 71 (MVKEKKKADK…VQMEQSEEET (71 aa)). Polar residues predominate over residues 17–37 (RSPSSISDNPEASKQDSNASK). Low complexity predominate over residues 39-50 (EVAPSAVVPVVE). MORN repeat units lie at residues 86–108 (YEGE…GGNT), 109–129 (YHGM…WADG), 132–154 (YEGD…DGST), 155–172 (YEGE…MFKC), 179–196 (YIGH…SIYY), 204–225 (YEGD…KSGN), 227–244 (YEGQ…RMRW), 251–268 (YTGH…THTW), 284–305 (YIGE…ASGA), and 307–328 (YEGE…KNGH). Residues 356-372 (WSDASQRSRQPRGSSVS) are compositionally biased toward polar residues. Residues 356–386 (WSDASQRSRQPRGSSVSAVREPETLRKLDGS) form a disordered region. Over residues 375–386 (REPETLRKLDGS) the composition is skewed to basic and acidic residues. The stretch at 790–832 (LKEKVKENQLQEAELAQQRQIENEELEARLNILREEEARKQDF) forms a coiled coil. The disordered stretch occupies residues 839–876 (LKEPSEIPASQPLTPSPPKEDLASIQTSKASPGKKKKK).

Interacts with RSPH6A. Does not appear to be part of the axonemal radial spoke complexes 1 or 2. Expressed in ependymal cells (at protein level).

The protein localises to the cytoplasm. Its subcellular location is the cytoskeleton. It localises to the cilium axoneme. It is found in the cell projection. The protein resides in the cilium. The protein localises to the flagellum. Functionally, may function as part of the axonemal radial spoke complex 3 (RS3). Radial spoke complexes are important for ciliary motility. The protein is Radial spoke head 10 homolog B of Mus musculus (Mouse).